Consider the following 140-residue polypeptide: 3-hydroxyacyl-[acyl-carrier-protein] dehydratase FabZ (140 aa).

His47 is a catalytic residue.

This sequence belongs to the thioester dehydratase family. FabZ subfamily.

It localises to the cytoplasm. It carries out the reaction a (3R)-hydroxyacyl-[ACP] = a (2E)-enoyl-[ACP] + H2O. Functionally, involved in unsaturated fatty acids biosynthesis. Catalyzes the dehydration of short chain beta-hydroxyacyl-ACPs and long chain saturated and unsaturated beta-hydroxyacyl-ACPs. The chain is 3-hydroxyacyl-[acyl-carrier-protein] dehydratase FabZ from Streptococcus mutans serotype c (strain ATCC 700610 / UA159).